A 502-amino-acid polypeptide reads, in one-letter code: Mannitol 2-dehydrogenase (502 aa).

37-48 contributes to the NAD(+) binding site; that stretch reads IVHIGVGGFHRA.

Belongs to the mannitol dehydrogenase family. As to quaternary structure, monomer.

The catalysed reaction is D-mannitol + NAD(+) = D-fructose + NADH + H(+). Catalyzes the NAD(H)-dependent interconversion of D-fructose and D-mannitol in the mannitol metabolic pathway. In Aspergillus clavatus (strain ATCC 1007 / CBS 513.65 / DSM 816 / NCTC 3887 / NRRL 1 / QM 1276 / 107), this protein is Mannitol 2-dehydrogenase.